The following is a 457-amino-acid chain: Chromosomal replication initiator protein DnaA (457 aa).

The interval 1 to 90 (MAVSLWQQCI…RPSAKPQAPA (90 aa)) is domain I, interacts with DnaA modulators. The segment at 79–120 (GSRPSAKPQAPAPAAVKAAAPQPKPGNSFVSQPEPAVSNHRS) is disordered. A compositionally biased stretch (low complexity) spans 84-99 (AKPQAPAPAAVKAAAP). A domain II region spans residues 91-120 (PAAVKAAAPQPKPGNSFVSQPEPAVSNHRS). Residues 121 to 337 (NINPTYQFDN…GALNRVIANA (217 aa)) are domain III, AAA+ region. 4 residues coordinate ATP: Gly165, Gly167, Lys168, and Thr169. The segment at 338–457 (NFTGRPITID…YANLIRTLSS (120 aa)) is domain IV, binds dsDNA.

Belongs to the DnaA family. In terms of assembly, oligomerizes as a right-handed, spiral filament on DNA at oriC.

It is found in the cytoplasm. In terms of biological role, plays an essential role in the initiation and regulation of chromosomal replication. ATP-DnaA binds to the origin of replication (oriC) to initiate formation of the DNA replication initiation complex once per cell cycle. Binds the DnaA box (a 9 base pair repeat at the origin) and separates the double-stranded (ds)DNA. Forms a right-handed helical filament on oriC DNA; dsDNA binds to the exterior of the filament while single-stranded (ss)DNA is stabiized in the filament's interior. The ATP-DnaA-oriC complex binds and stabilizes one strand of the AT-rich DNA unwinding element (DUE), permitting loading of DNA polymerase. After initiation quickly degrades to an ADP-DnaA complex that is not apt for DNA replication. Binds acidic phospholipids. This chain is Chromosomal replication initiator protein DnaA, found in Shewanella amazonensis (strain ATCC BAA-1098 / SB2B).